Reading from the N-terminus, the 102-residue chain is PqqA binding protein (102 aa).

This sequence belongs to the PqqD family. Monomer. Interacts with PqqE.

The protein operates within cofactor biosynthesis; pyrroloquinoline quinone biosynthesis. Functionally, functions as a PqqA binding protein and presents PqqA to PqqE, in the pyrroloquinoline quinone (PQQ) biosynthetic pathway. The protein is PqqA binding protein of Rhodopseudomonas palustris (strain HaA2).